Reading from the N-terminus, the 284-residue chain is Homeobox-leucine zipper protein HAT4 (284 aa).

A compositionally biased stretch (polar residues) spans 48-59 (ESFTSSVPNSDS). Residues 48 to 132 (ESFTSSVPNS…DGDNSRKKLR (85 aa)) form a disordered region. Low complexity predominate over residues 89–100 (VSSPNSTVSSST). Positions 126–185 (NSRKKLRLSKDQSAILEETFKDHSTLNPKQKQALAKQLGLRARQVEVWFQNRRARTKLKQ) form a DNA-binding region, homeobox. The leucine-zipper stretch occupies residues 193 to 214 (LRRCCENLTEENRRLQKEVTEL).

It belongs to the HD-ZIP homeobox family. Class II subfamily. Interacts with DNA as homodimer. Predominantly expressed in leaves and stems.

The protein localises to the nucleus. In terms of biological role, probable transcription factor involved in the negative regulation of cell elongation and specific cell proliferation processes such as lateral root formation and secondary growth of the vascular system. Acts as a mediator of the red/far-red light effects on leaf cell expansion in the shading response. Binds to the DNA sequence 5'-CAAT[GC]ATTG-3'. Negatively regulates its own expression. The polypeptide is Homeobox-leucine zipper protein HAT4 (HAT4) (Arabidopsis thaliana (Mouse-ear cress)).